The primary structure comprises 329 residues: Holliday junction branch migration complex subunit RuvB (329 aa).

The segment at 1 to 181 (MNELLHQHKA…FGIPLHLEFY (181 aa)) is large ATPase domain (RuvB-L). ATP-binding residues include Leu-20, Arg-21, Gly-62, Lys-65, Thr-66, Thr-67, Arg-171, Tyr-181, and Arg-218. Residue Thr-66 coordinates Mg(2+). Residues 182–252 (SVEELMLVIK…FADSALFNLG (71 aa)) form a small ATPAse domain (RuvB-S) region. The segment at 255–329 (KSGLDKMDIK…IEHLMNYKYI (75 aa)) is head domain (RuvB-H). DNA-binding residues include Arg-308 and Arg-313.

The protein belongs to the RuvB family. In terms of assembly, homohexamer. Forms an RuvA(8)-RuvB(12)-Holliday junction (HJ) complex. HJ DNA is sandwiched between 2 RuvA tetramers; dsDNA enters through RuvA and exits via RuvB. An RuvB hexamer assembles on each DNA strand where it exits the tetramer. Each RuvB hexamer is contacted by two RuvA subunits (via domain III) on 2 adjacent RuvB subunits; this complex drives branch migration. In the full resolvosome a probable DNA-RuvA(4)-RuvB(12)-RuvC(2) complex forms which resolves the HJ.

It is found in the cytoplasm. The enzyme catalyses ATP + H2O = ADP + phosphate + H(+). Functionally, the RuvA-RuvB-RuvC complex processes Holliday junction (HJ) DNA during genetic recombination and DNA repair, while the RuvA-RuvB complex plays an important role in the rescue of blocked DNA replication forks via replication fork reversal (RFR). RuvA specifically binds to HJ cruciform DNA, conferring on it an open structure. The RuvB hexamer acts as an ATP-dependent pump, pulling dsDNA into and through the RuvAB complex. RuvB forms 2 homohexamers on either side of HJ DNA bound by 1 or 2 RuvA tetramers; 4 subunits per hexamer contact DNA at a time. Coordinated motions by a converter formed by DNA-disengaged RuvB subunits stimulates ATP hydrolysis and nucleotide exchange. Immobilization of the converter enables RuvB to convert the ATP-contained energy into a lever motion, pulling 2 nucleotides of DNA out of the RuvA tetramer per ATP hydrolyzed, thus driving DNA branch migration. The RuvB motors rotate together with the DNA substrate, which together with the progressing nucleotide cycle form the mechanistic basis for DNA recombination by continuous HJ branch migration. Branch migration allows RuvC to scan DNA until it finds its consensus sequence, where it cleaves and resolves cruciform DNA. In Anaplasma phagocytophilum (strain HZ), this protein is Holliday junction branch migration complex subunit RuvB.